A 235-amino-acid polypeptide reads, in one-letter code: tRNA pseudouridine synthase B (235 aa).

D48 serves as the catalytic Nucleophile.

Belongs to the pseudouridine synthase TruB family. Type 1 subfamily.

The catalysed reaction is uridine(55) in tRNA = pseudouridine(55) in tRNA. Its function is as follows. Responsible for synthesis of pseudouridine from uracil-55 in the psi GC loop of transfer RNAs. The protein is tRNA pseudouridine synthase B of Parabacteroides distasonis (strain ATCC 8503 / DSM 20701 / CIP 104284 / JCM 5825 / NCTC 11152).